Here is a 555-residue protein sequence, read N- to C-terminus: CTP synthase (555 aa).

The amidoligase domain stretch occupies residues 1–271; it reads MVKRGKKTKY…DDKLAELFNI (271 aa). Ser-19 provides a ligand contact to CTP. Ser-19 provides a ligand contact to UTP. Residues 20 to 25 and Asp-77 contribute to the ATP site; that span reads SLGKGL. Asp-77 and Glu-145 together coordinate Mg(2+). CTP is bound by residues 152 to 154, 192 to 197, and Lys-228; these read DIE and KTKPTQ. Residues 192 to 197 and Lys-228 each bind UTP; that span reads KTKPTQ. Residues 297-537 enclose the Glutamine amidotransferase type-1 domain; that stretch reads RIGIVGKYVE…VKAALEHRDA (241 aa). Gly-358 is a binding site for L-glutamine. Cys-385 functions as the Nucleophile; for glutamine hydrolysis in the catalytic mechanism. L-glutamine-binding positions include 386-389, Glu-409, and Arg-466; that span reads LGLQ. Residues His-510 and Glu-512 contribute to the active site. A disordered region spans residues 536–555; that stretch reads DAQQRQPSAEVKKLPVGKNG.

It belongs to the CTP synthase family. In terms of assembly, homotetramer.

The catalysed reaction is UTP + L-glutamine + ATP + H2O = CTP + L-glutamate + ADP + phosphate + 2 H(+). It catalyses the reaction L-glutamine + H2O = L-glutamate + NH4(+). It carries out the reaction UTP + NH4(+) + ATP = CTP + ADP + phosphate + 2 H(+). It functions in the pathway pyrimidine metabolism; CTP biosynthesis via de novo pathway; CTP from UDP: step 2/2. Allosterically activated by GTP, when glutamine is the substrate; GTP has no effect on the reaction when ammonia is the substrate. The allosteric effector GTP functions by stabilizing the protein conformation that binds the tetrahedral intermediate(s) formed during glutamine hydrolysis. Inhibited by the product CTP, via allosteric rather than competitive inhibition. Catalyzes the ATP-dependent amination of UTP to CTP with either L-glutamine or ammonia as the source of nitrogen. Regulates intracellular CTP levels through interactions with the four ribonucleotide triphosphates. This chain is CTP synthase, found in Anaeromyxobacter dehalogenans (strain 2CP-C).